The primary structure comprises 869 residues: Iron-sulfur cluster assembly SufBD family protein ML0593 (869 aa).

The DOD-type homing endonuclease domain occupies 344 to 477 (LLGLWLGDGH…VRQLAIGCGL (134 aa)).

It belongs to the iron-sulfur cluster assembly SufBD family. In terms of processing, this protein undergoes a protein self splicing that involves a post-translational excision of the intervening region (intein) followed by peptide ligation.

This is Iron-sulfur cluster assembly SufBD family protein ML0593 from Mycobacterium leprae (strain TN).